Here is a 164-residue protein sequence, read N- to C-terminus: UPF0114 protein YqhA (164 aa).

A run of 3 helical transmembrane segments spans residues 10–32 (YASR…ALAL), 53–75 (LILV…MVMF), and 136–155 (LMWY…VMGY).

This sequence belongs to the UPF0114 family.

Its subcellular location is the cell membrane. This chain is UPF0114 protein YqhA, found in Shigella flexneri.